Consider the following 208-residue polypeptide: Histone 24 (208 aa).

At serine 2 the chain carries N-acetylserine. Residue lysine 14 is modified to N6-methyllysine. One can recognise an H15 domain in the interval 37-113 (AHPPYINMIK…GANGRFRVPE (77 aa)). Positions 101-208 (AGSGANGRFR…KKAAKPAAKA (108 aa)) are disordered. The segment covering 114 to 138 (KAAAAKKPAAAKKPAAAKKPAAAKK) has biased composition (low complexity). Basic residues-rich tracts occupy residues 144–155 (KAKKPAAAKPKK) and 162–202 (KVKK…KKAA).

This sequence belongs to the histone H1/H5 family. As to quaternary structure, interacts with nmad-1. Interacts (when monomethylated at Lys-14) with chromobox protein homolog hpl-1; the interaction is direct. Interacts (when monomethylated at Lys-14) with histone H3 (when trimethylated on 'Lys-27'); the interaction is direct. Methylation at lysine 14 is necessary to regulate male tail development.

The protein localises to the nucleus. Its subcellular location is the chromosome. It is found in the cytoplasm. Histones H1 are necessary for the condensation of nucleosome chains into higher-order structures. Probably does not act as global transcriptional repressor. Acting in concert with chromobox protein homologs hpl-1 and hpl-2, involved in reproduction, somatic gonad development, male tail development, and vulval cell fate decisions; perhaps as a result of modulating expression of Hox genes mab-5 and egl-5. Plays a role in linking epigenetic regulation with the innate immune response. The protein is Histone 24 of Caenorhabditis elegans.